Reading from the N-terminus, the 497-residue chain is Carboxylesterase (497 aa).

The Acyl-ester intermediate role is filled by serine 185. Residues glutamate 319 and histidine 415 each act as charge relay system in the active site.

The protein belongs to the type-B carboxylesterase/lipase family.

It is found in the secreted. It catalyses the reaction a carboxylic ester + H2O = an alcohol + a carboxylate + H(+). The protein is Carboxylesterase of Thermobifida fusca (Thermomonospora fusca).